The following is a 75-amino-acid chain: MSASVRGNSKNPQSTSAITTLTDKLLEDISGDFETLQKQFSEKLETMSTRLDQLEESMREAMNKKSSVSPVTSTE.

Belongs to the HSBP1 family.

This is an uncharacterized protein from Schizosaccharomyces pombe (strain 972 / ATCC 24843) (Fission yeast).